A 441-amino-acid polypeptide reads, in one-letter code: 3-phosphoshikimate 1-carboxyvinyltransferase (441 aa).

3 residues coordinate 3-phosphoshikimate: lysine 22, serine 23, and arginine 27. Lysine 22 contributes to the phosphoenolpyruvate binding site. The phosphoenolpyruvate site is built by glycine 95 and arginine 123. 3-phosphoshikimate is bound by residues serine 168, glutamine 170, aspartate 321, and lysine 348. Glutamine 170 serves as a coordination point for phosphoenolpyruvate. Residue aspartate 321 is the Proton acceptor of the active site. Positions 352 and 400 each coordinate phosphoenolpyruvate.

This sequence belongs to the EPSP synthase family. As to quaternary structure, monomer.

It is found in the cytoplasm. It catalyses the reaction 3-phosphoshikimate + phosphoenolpyruvate = 5-O-(1-carboxyvinyl)-3-phosphoshikimate + phosphate. Its pathway is metabolic intermediate biosynthesis; chorismate biosynthesis; chorismate from D-erythrose 4-phosphate and phosphoenolpyruvate: step 6/7. Functionally, catalyzes the transfer of the enolpyruvyl moiety of phosphoenolpyruvate (PEP) to the 5-hydroxyl of shikimate-3-phosphate (S3P) to produce enolpyruvyl shikimate-3-phosphate and inorganic phosphate. The sequence is that of 3-phosphoshikimate 1-carboxyvinyltransferase from Novosphingobium aromaticivorans (strain ATCC 700278 / DSM 12444 / CCUG 56034 / CIP 105152 / NBRC 16084 / F199).